Consider the following 59-residue polypeptide: MRLSYLSLALAIIFVLTIMHASNVEAKASADPEPDAVGSINVKNLMDMIREQITSRLKK.

The first 21 residues, 1-21 (MRLSYLSLALAIIFVLTIMHA), serve as a signal peptide directing secretion. The propeptide occupies 22 to 38 (SNVEAKASADPEPDAVG).

Expressed by the venom gland.

The protein localises to the secreted. Its function is as follows. May have antimicrobial properties, like most ant linear peptides. This Myrmecia gulosa (Red bulldog ant) protein is U-myrmeciitoxin(01)-Mg5a.